Reading from the N-terminus, the 659-residue chain is MFS-type transporter phiD (659 aa).

Disordered stretches follow at residues 1 to 42 and 76 to 127; these read MGED…SWRV and DLTV…IGKQ. A compositionally biased stretch (basic and acidic residues) spans 93 to 109; it reads SIEKSKEDGDADDKRQS. The helical transmembrane segment at 144–164 threads the bilayer; sequence LIVLAASLAGFFSPLSASIYY. An N-linked (GlcNAc...) asparagine glycan is attached at Asn-182. The next 5 helical transmembrane spans lie at 183-203, 210-230, 235-257, 269-289, and 299-319; these read LTVT…AGFS, PAYA…ALQN, LMVL…NGVV, FIAF…VIGG, and WIFW…FLFF. The N-linked (GlcNAc...) asparagine glycan is linked to Asn-338. The next 6 helical transmembrane spans lie at 385-405, 422-442, 475-495, 502-522, 549-569, and 572-592; these read AMIL…LTGA, LMYI…GKLV, LEVG…YGWI, VWGP…FFQV, LGAA…EGWA, and IVAM…VNGI. Basic and acidic residues-rich tracts occupy residues 605–634 and 641–651; these read KKAG…QKAE and DLEKQDRKDSQ. Residues 605–659 form a disordered region; sequence KKAGREAKIEAEKRAREEIETKKEAKQKAEEDVEIGDLEKQDRKDSQRPTSSKAT.

It belongs to the major facilitator superfamily.

The protein localises to the membrane. Functionally, MFS-type transporter; part of the gene cluster that mediates the biosynthesis of the antihypercholesterolemic agents phomoidrides which are dimeric anhydrides. The chain is MFS-type transporter phiD from Fungal sp. (strain ATCC 74256).